Reading from the N-terminus, the 81-residue chain is Photosystem I iron-sulfur center (81 aa).

2 consecutive 4Fe-4S ferredoxin-type domains span residues 2 to 31 (SHAV…MVPW) and 37 to 68 (GQIA…IRVY). The [4Fe-4S] cluster site is built by C11, C14, C17, C21, C48, C51, C54, and C58.

As to quaternary structure, the cyanobacterial PSI reaction center is composed of one copy each of PsaA,B,C,D,E,F,I,J,K,L,M and X, and forms trimeric complexes. [4Fe-4S] cluster serves as cofactor.

It localises to the cellular thylakoid membrane. The enzyme catalyses reduced [plastocyanin] + hnu + oxidized [2Fe-2S]-[ferredoxin] = oxidized [plastocyanin] + reduced [2Fe-2S]-[ferredoxin]. Functionally, apoprotein for the two 4Fe-4S centers FA and FB of photosystem I (PSI); essential for photochemical activity. FB is the terminal electron acceptor of PSI, donating electrons to ferredoxin. The C-terminus interacts with PsaA/B/D and helps assemble the protein into the PSI complex. Required for binding of PsaD and PsaE to PSI. PSI is a plastocyanin/cytochrome c6-ferredoxin oxidoreductase, converting photonic excitation into a charge separation, which transfers an electron from the donor P700 chlorophyll pair to the spectroscopically characterized acceptors A0, A1, FX, FA and FB in turn. The polypeptide is Photosystem I iron-sulfur center (Synechococcus sp. (strain WH8103)).